Here is a 422-residue protein sequence, read N- to C-terminus: Proline-rich protein 22 (422 aa).

3 disordered regions span residues 1–35 (MQHPKPFCAPAAPQEGFSPQSLEGAEVLGNQPAPT), 306–325 (LCEVPGPALPDSSGGNSADD), and 363–422 (EEQP…ATPH). The span at 383–400 (GKRKASTAKKGKPGRKAR) shows a compositional bias: basic residues. Basic and acidic residues predominate over residues 413–422 (PREDLGATPH).

The polypeptide is Proline-rich protein 22 (PRR22) (Homo sapiens (Human)).